A 269-amino-acid chain; its full sequence is NAD kinase (269 aa).

D45 (proton acceptor) is an active-site residue. Residues 45-46 (DG), 122-123 (NE), R149, D151, and A186 each bind NAD(+).

The protein belongs to the NAD kinase family. A divalent metal cation serves as cofactor.

It localises to the cytoplasm. It carries out the reaction NAD(+) + ATP = ADP + NADP(+) + H(+). Involved in the regulation of the intracellular balance of NAD and NADP, and is a key enzyme in the biosynthesis of NADP. Catalyzes specifically the phosphorylation on 2'-hydroxyl of the adenosine moiety of NAD to yield NADP. The polypeptide is NAD kinase (Staphylococcus saprophyticus subsp. saprophyticus (strain ATCC 15305 / DSM 20229 / NCIMB 8711 / NCTC 7292 / S-41)).